Consider the following 46-residue polypeptide: Iota-conotoxin-like M11.1 (46 aa).

4 disulfides stabilise this stretch: cysteine 5–cysteine 19, cysteine 12–cysteine 22, cysteine 18–cysteine 27, and cysteine 21–cysteine 38. D-methionine is present on methionine 44. Position 46 (arginine 46) is a propeptide, removed by a carboxypeptidase.

This sequence belongs to the conotoxin I1 superfamily. As to expression, expressed by the venom duct.

It localises to the secreted. Functionally, iota-conotoxins bind to voltage-gated sodium channels (Nav) and act as agonists by shifting the voltage-dependence of activation to more hyperpolarized levels. Produces general excitatory symptoms. In Conus magus (Magical cone), this protein is Iota-conotoxin-like M11.1.